A 256-amino-acid polypeptide reads, in one-letter code: MAWSAGQYVKFEDERTRPARDLLAQVPLTRIDRAIDLGCGPGNSTELIVERYGVAGVSGLDSDDNMLEAARARMPGTDFVKADLATWLPDEPVDLLFANAVFQWLPNHLEIFDRLMDGLKSGGVLAIQMPDNLTEPSHLMMEETAKNGPWSDAFAKKSVRRNPLPAPSVYYNRLIGKSARIDLWHTNYNHALENAAAIVEWVKATGLRPYLDHAGAEHRDAFTADYLARIEKAYPPLTDGKVLLRFPRLFLVAVKK.

The protein belongs to the methyltransferase superfamily. Tam family.

It localises to the cytoplasm. It catalyses the reaction trans-aconitate + S-adenosyl-L-methionine = (E)-3-(methoxycarbonyl)pent-2-enedioate + S-adenosyl-L-homocysteine. Its function is as follows. Catalyzes the S-adenosylmethionine monomethyl esterification of trans-aconitate. The protein is Trans-aconitate 2-methyltransferase of Rhizobium rhizogenes (strain K84 / ATCC BAA-868) (Agrobacterium radiobacter).